The chain runs to 159 residues: MTENAQAAQPVFSIEKLYVKDLSLEVPNAPKIFLDRENPQINVQLRTEASNVDEGVFEVTLTVTVSSKLPEDRTVFLVEVAQAGIFQIRNIPEGDLEAVMMIGCPNILFPYARESVSDAITRAGFQPVVLAPVNFESLYQAQQQQQAAAAAQAGELPIQ.

This sequence belongs to the SecB family. In terms of assembly, homotetramer, a dimer of dimers. One homotetramer interacts with 1 SecA dimer.

It is found in the cytoplasm. Functionally, one of the proteins required for the normal export of preproteins out of the cell cytoplasm. It is a molecular chaperone that binds to a subset of precursor proteins, maintaining them in a translocation-competent state. It also specifically binds to its receptor SecA. This Aromatoleum aromaticum (strain DSM 19018 / LMG 30748 / EbN1) (Azoarcus sp. (strain EbN1)) protein is Protein-export protein SecB.